The chain runs to 298 residues: MQRQYNESHRSVMVQETLHYLRPTYNGVYVDGTLGEGGHTKAIIEATSGKCKVIGLDIDEEVLAIAEQNLKEFKENVELFNVSYVDFDLVLESLAVDKVDGFLLDIGVSTYQLKAKGRGFSYEIDEPLDMRMSLSGSVTAADVVNSYPEKELARIIFEYGEEKRYARRIARKIVERRPIQTTIQLVEAIKAALPPQERFRRKRHYATRTFQAIRIEVNGELKGLRTALEKFPNYLKPGGRIVIISFHSLEDRTVKHFFREQDGVTLKILTRKPVVPSVEEVSENPRARSAKLRAAERI.

S-adenosyl-L-methionine contacts are provided by residues 37–39 (GGH), D57, L91, D105, and Q112.

Belongs to the methyltransferase superfamily. RsmH family.

The protein localises to the cytoplasm. The catalysed reaction is cytidine(1402) in 16S rRNA + S-adenosyl-L-methionine = N(4)-methylcytidine(1402) in 16S rRNA + S-adenosyl-L-homocysteine + H(+). Specifically methylates the N4 position of cytidine in position 1402 (C1402) of 16S rRNA. The chain is Ribosomal RNA small subunit methyltransferase H from Kosmotoga olearia (strain ATCC BAA-1733 / DSM 21960 / TBF 19.5.1).